Here is a 336-residue protein sequence, read N- to C-terminus: G-protein coupled receptor homolog FPV027 (336 aa).

The Extracellular portion of the chain corresponds to 1-31 (MSMNNITSKMNQDSYGYFQLHMSDFTRVSLS). Residue asparagine 5 is glycosylated (N-linked (GlcNAc...) asparagine; by host). The chain crosses the membrane as a helical span at residues 32–52 (IVFTLVFLVGIIGNAVIIWFI). Over 53–63 (GFKWTKTISTL) the chain is Cytoplasmic. The helical transmembrane segment at 64–84 (LFINLALADSLFLIFIPVYTV) threads the bilayer. Residues 85-101 (YVLSNFHWYLGEFLCRV) lie on the Extracellular side of the membrane. Cysteine 99 and cysteine 178 are joined by a disulfide. The helical transmembrane segment at 102-122 (SSFFFTTNMYASMFLLTFISI) threads the bilayer. The Cytoplasmic segment spans residues 123–143 (DKYLTLTSHRLVYKYRKYRNY). A helical membrane pass occupies residues 144–164 (YVCIGAIWCISIALGVPTLYY). At 165 to 200 (KRVILSSSRNETRCISYYGDDKHTAITIYRIIVCIR) the chain is on the extracellular side. The N-linked (GlcNAc...) asparagine; by host glycan is linked to asparagine 174. A helical transmembrane segment spans residues 201 to 221 (FIIGYVFPMTVILLSYALIVY). The Cytoplasmic portion of the chain corresponds to 222 to 240 (KVKFINKPPNRSFMITTAS). A helical transmembrane segment spans residues 241-261 (IFVFLACWTPHHVLNIISLYG). The Extracellular segment spans residues 262-276 (LKSTSMYNYIKESIP). A helical transmembrane segment spans residues 277-297 (FVNAIAFVYSAINPIIYIFVI). At 298–336 (RLTSTYDSDTMDELRSALLDEETTSTEDCSDIEISDISR) the chain is on the cytoplasmic side.

It belongs to the G-protein coupled receptor 1 family.

Its subcellular location is the host cell membrane. In Vertebrata (FPV), this protein is G-protein coupled receptor homolog FPV027.